A 719-amino-acid chain; its full sequence is Ribosomal RNA large subunit methyltransferase K/L (719 aa).

One can recognise a THUMP domain in the interval 43-154 (IGYKACLWSR…KGKANITLDL (112 aa)).

The protein belongs to the methyltransferase superfamily. RlmKL family.

The protein resides in the cytoplasm. The catalysed reaction is guanosine(2445) in 23S rRNA + S-adenosyl-L-methionine = N(2)-methylguanosine(2445) in 23S rRNA + S-adenosyl-L-homocysteine + H(+). It carries out the reaction guanosine(2069) in 23S rRNA + S-adenosyl-L-methionine = N(2)-methylguanosine(2069) in 23S rRNA + S-adenosyl-L-homocysteine + H(+). In terms of biological role, specifically methylates the guanine in position 2445 (m2G2445) and the guanine in position 2069 (m7G2069) of 23S rRNA. The sequence is that of Ribosomal RNA large subunit methyltransferase K/L from Aeromonas salmonicida (strain A449).